Reading from the N-terminus, the 245-residue chain is Complement C1q subcomponent subunit C (245 aa).

The signal sequence occupies residues 1 to 28; sequence MDVGPSSLPHLGLKLLLLLLLLPLRGQA. The 82-residue stretch at 31–112 folds into the Collagen-like domain; that stretch reads GCYGIPGMPG…GIPGEPGEEG (82 aa). 4-hydroxyproline occurs at positions 36, 39, 42, 45, 54, and 63. The interval 45–113 is disordered; it reads PGKDGYDGLP…IPGEPGEEGR (69 aa). Low complexity predominate over residues 54-71; sequence PGPKGEPGIPAIPGIRGP. The residue at position 75 (Lys-75) is a 5-hydroxylysine. An O-linked (Gal...) hydroxylysine glycan is attached at Lys-75. 5 positions are modified to 4-hydroxyproline: Pro-81, Pro-93, Pro-96, Pro-99, and Pro-105. A compositionally biased stretch (pro residues) spans 90–99; that stretch reads MGPPGMPGVP. Residues 115–245 form the C1q domain; that stretch reads KQKFQSVFTV…VFSGFLLFPD (131 aa). An intrachain disulfide couples Cys-179 to Cys-193.

Core component of the complement C1 complex, a calcium-dependent complex composed of 1 molecule of the C1Q subcomplex, 2 molecules of C1R and 2 molecules of C1S. The C1Q subcomplex is composed 18 subunits: 3 chains of C1QA, C1QB, and C1QC trimerize to form 6 collagen-like triple helices connected to six globular ligand-recognition modules (C1q domain). In terms of processing, O-linked glycans consist of Glc-Gal disaccharides bound to the oxygen atom of post-translationally added hydroxyl groups.

Its subcellular location is the secreted. The protein localises to the cell surface. The C1Q subcomplex is inhibited by sulfated molecules, such as triterpenoid sulfates, heparan sulfate, or chondroitin sulfates. Its function is as follows. Core component of the complement C1 complex, a multiprotein complex that initiates the classical pathway of the complement system, a cascade of proteins that leads to phagocytosis and breakdown of pathogens and signaling that strengthens the adaptive immune system. The classical complement pathway is initiated by the C1Q subcomplex of the C1 complex, which specifically binds IgG or IgM immunoglobulins complexed with antigens, forming antigen-antibody complexes on the surface of pathogens: C1QA, together with C1QB and C1QC, specifically recognizes and binds the Fc regions of IgG or IgM via its C1q domain. Immunoglobulin-binding activates the proenzyme C1R, which cleaves C1S, initiating the proteolytic cascade of the complement system. The C1Q subcomplex is activated by a hexamer of IgG complexed with antigens, while it is activated by a pentameric IgM. The C1Q subcomplex also recognizes and binds phosphatidylserine exposed on the surface of cells undergoing programmed cell death, possibly promoting activation of the complement system. This is Complement C1q subcomponent subunit C from Homo sapiens (Human).